The chain runs to 155 residues: Zinc finger HIT domain-containing protein 3 (155 aa).

The Zn(2+) site is built by C11, C14, C22, C25, C30, C34, H38, and C42. The HIT-type zinc finger occupies 11 to 42 (CVICLEKPKYRCPACRVPYCSVVCFRKHKEQC). S80 bears the Phosphoserine mark.

In terms of assembly, thyroid receptor interacting proteins (TRIPs) specifically interact with the ligand binding domain of the thyroid receptor (TR). Requires the presence of thyroid hormone for its interaction. Interacts with NUFIP1. Interacts (via HIT-type zinc finger) with the RUVBL1/RUVBL2 complex in the presence of ADP.

The protein localises to the cytoplasm. It localises to the nucleus. The chain is Zinc finger HIT domain-containing protein 3 (ZNHIT3) from Homo sapiens (Human).